Here is an 87-residue protein sequence, read N- to C-terminus: Small ribosomal subunit protein bS20 (87 aa).

Residues 1–15 (MANHKSAMKRIKQTA) show a composition bias toward basic residues. Positions 1-27 (MANHKSAMKRIKQTAKRTERNKHERST) are disordered. Basic and acidic residues predominate over residues 16–27 (KRTERNKHERST).

The protein belongs to the bacterial ribosomal protein bS20 family.

Binds directly to 16S ribosomal RNA. The sequence is that of Small ribosomal subunit protein bS20 from Citrifermentans bemidjiense (strain ATCC BAA-1014 / DSM 16622 / JCM 12645 / Bem) (Geobacter bemidjiensis).